The primary structure comprises 283 residues: Diaminopimelate epimerase (283 aa).

Residues Asn13, Gln46, and Asn66 each coordinate substrate. Cys75 serves as the catalytic Proton donor. Substrate is bound by residues 76-77 (GN), Asn166, Asn199, and 217-218 (ER). Cys226 acts as the Proton acceptor in catalysis. 227-228 (GT) serves as a coordination point for substrate.

It belongs to the diaminopimelate epimerase family. Homodimer.

Its subcellular location is the cytoplasm. The catalysed reaction is (2S,6S)-2,6-diaminopimelate = meso-2,6-diaminopimelate. It functions in the pathway amino-acid biosynthesis; L-lysine biosynthesis via DAP pathway; DL-2,6-diaminopimelate from LL-2,6-diaminopimelate: step 1/1. Catalyzes the stereoinversion of LL-2,6-diaminopimelate (L,L-DAP) to meso-diaminopimelate (meso-DAP), a precursor of L-lysine and an essential component of the bacterial peptidoglycan. The protein is Diaminopimelate epimerase of Herminiimonas arsenicoxydans.